The sequence spans 431 residues: Sulfide dehydrogenase [flavocytochrome c] flavoprotein chain (431 aa).

The segment at residues 1–30 is a signal peptide (tat-type signal); the sequence is MTLNRRDFIKTSGAAVAAVGILGFPHLAFG. Residue 70-76 participates in FAD binding; it reads YTCYLSN. The cysteines at positions 191 and 367 are disulfide-linked.

In terms of assembly, dimer of one cytochrome and one flavoprotein. In terms of processing, predicted to be exported by the Tat system. The position of the signal peptide cleavage has been experimentally proven.

The protein resides in the periplasm. It carries out the reaction hydrogen sulfide + 2 Fe(III)-[cytochrome c] = sulfur + 2 Fe(II)-[cytochrome c] + H(+). This is Sulfide dehydrogenase [flavocytochrome c] flavoprotein chain (fccB) from Allochromatium vinosum (strain ATCC 17899 / DSM 180 / NBRC 103801 / NCIMB 10441 / D) (Chromatium vinosum).